A 356-amino-acid chain; its full sequence is Chorismate synthase (356 aa).

NADP(+)-binding residues include Arg48 and Arg54. FMN is bound by residues 125–127 (RSS), 237–238 (NA), Gly282, 297–301 (KPTSS), and Arg323.

Belongs to the chorismate synthase family. Homotetramer. FMNH2 is required as a cofactor.

It carries out the reaction 5-O-(1-carboxyvinyl)-3-phosphoshikimate = chorismate + phosphate. The protein operates within metabolic intermediate biosynthesis; chorismate biosynthesis; chorismate from D-erythrose 4-phosphate and phosphoenolpyruvate: step 7/7. Its function is as follows. Catalyzes the anti-1,4-elimination of the C-3 phosphate and the C-6 proR hydrogen from 5-enolpyruvylshikimate-3-phosphate (EPSP) to yield chorismate, which is the branch point compound that serves as the starting substrate for the three terminal pathways of aromatic amino acid biosynthesis. This reaction introduces a second double bond into the aromatic ring system. This Rhizorhabdus wittichii (strain DSM 6014 / CCUG 31198 / JCM 15750 / NBRC 105917 / EY 4224 / RW1) (Sphingomonas wittichii) protein is Chorismate synthase.